Here is a 304-residue protein sequence, read N- to C-terminus: Bifunctional protein FolD 3 (304 aa).

NADP(+) contacts are provided by residues 172–174 (GRS), serine 197, and isoleucine 238.

The protein belongs to the tetrahydrofolate dehydrogenase/cyclohydrolase family. Homodimer.

The enzyme catalyses (6R)-5,10-methylene-5,6,7,8-tetrahydrofolate + NADP(+) = (6R)-5,10-methenyltetrahydrofolate + NADPH. It catalyses the reaction (6R)-5,10-methenyltetrahydrofolate + H2O = (6R)-10-formyltetrahydrofolate + H(+). It functions in the pathway one-carbon metabolism; tetrahydrofolate interconversion. In terms of biological role, catalyzes the oxidation of 5,10-methylenetetrahydrofolate to 5,10-methenyltetrahydrofolate and then the hydrolysis of 5,10-methenyltetrahydrofolate to 10-formyltetrahydrofolate. This Rhizorhabdus wittichii (strain DSM 6014 / CCUG 31198 / JCM 15750 / NBRC 105917 / EY 4224 / RW1) (Sphingomonas wittichii) protein is Bifunctional protein FolD 3.